We begin with the raw amino-acid sequence, 177 residues long: Large ribosomal subunit protein uL6 (177 aa).

This sequence belongs to the universal ribosomal protein uL6 family. Part of the 50S ribosomal subunit.

In terms of biological role, this protein binds to the 23S rRNA, and is important in its secondary structure. It is located near the subunit interface in the base of the L7/L12 stalk, and near the tRNA binding site of the peptidyltransferase center. The polypeptide is Large ribosomal subunit protein uL6 (Nitrosospira multiformis (strain ATCC 25196 / NCIMB 11849 / C 71)).